A 364-amino-acid chain; its full sequence is NAD(P)H-quinone oxidoreductase subunit 1, chloroplastic (364 aa).

6 helical membrane passes run 27–47, 98–118, 127–147, 255–275, 301–321, and 337–357; these read IWLLVPIFTPVSGILIGVLVI, FSVGPSIAVISILLSYSVIPF, ISIGVFLWIAISSIAPIGLLM, GLFYVASYLNLLVSSLFVTVL, VFGSTIGILITLAKAYLFLFV, and LLNLGWKFLLPIALGNLLLTT.

This sequence belongs to the complex I subunit 1 family. NDH is composed of at least 16 different subunits, 5 of which are encoded in the nucleus.

The protein resides in the plastid. Its subcellular location is the chloroplast thylakoid membrane. The catalysed reaction is a plastoquinone + NADH + (n+1) H(+)(in) = a plastoquinol + NAD(+) + n H(+)(out). The enzyme catalyses a plastoquinone + NADPH + (n+1) H(+)(in) = a plastoquinol + NADP(+) + n H(+)(out). In terms of biological role, NDH shuttles electrons from NAD(P)H:plastoquinone, via FMN and iron-sulfur (Fe-S) centers, to quinones in the photosynthetic chain and possibly in a chloroplast respiratory chain. The immediate electron acceptor for the enzyme in this species is believed to be plastoquinone. Couples the redox reaction to proton translocation, and thus conserves the redox energy in a proton gradient. The sequence is that of NAD(P)H-quinone oxidoreductase subunit 1, chloroplastic from Illicium oligandrum (Star anise).